We begin with the raw amino-acid sequence, 291 residues long: MELIIATRKSKLAQVQTEKVMELLKGKENVDSKKLLVMTEGDRRLDVSLNKIGGKGLFVKEIELALLNKEAHGAVHSMKDVPFELPSEFELVAMPEREDIRDAFVSLNGSTLSNLRKGARIGTSSIRRAEQLKLFRDDLEIVPIRGNVQTRIKKITEENLDGIILAAAGLKRLGMEDVISDYFDPKVFLPAIGQGALGIECLKGGEFNDYFKALDSKEVRTTVEAERSFMKVLNGGCHSLIGAYSEVKDNDLYMIGTFTVNNRIVKKDILGNKEDNILLGKKLAEKILEEV.

Position 237 is an S-(dipyrrolylmethanemethyl)cysteine (Cys-237).

It belongs to the HMBS family. Monomer. The cofactor is dipyrromethane.

It carries out the reaction 4 porphobilinogen + H2O = hydroxymethylbilane + 4 NH4(+). It participates in porphyrin-containing compound metabolism; protoporphyrin-IX biosynthesis; coproporphyrinogen-III from 5-aminolevulinate: step 2/4. Its function is as follows. Tetrapolymerization of the monopyrrole PBG into the hydroxymethylbilane pre-uroporphyrinogen in several discrete steps. The chain is Porphobilinogen deaminase from Clostridium perfringens (strain 13 / Type A).